Reading from the N-terminus, the 819-residue chain is MGSGARFPSGTLRVRWLLLLGLVGPVLGAARPGFQQTSHLSSYEIITPWRLTRERREAPRPYSKQVSYVIQAEGKEHIIHLERNKDLLPEDFVVYTYNKEGTLITDHPNIQNHCHYRGYVEGVHNSSIALSDCFGLRGLLHLENASYGIEPLQNSSHFEHIIYRMDDVYKEPLKCGVSNKDIEKETAKDEEEEPPSMTQLLRRRRAVLPQTRYVELFIVVDKERYDMMGRNQTAVREEMILLANYLDSMYIMLNIRIVLVGLEIWTNGNLINIVGGAGDVLGNFVQWREKFLITRRRHDSAQLVLKKGFGGTAGMAFVGTVCSRSHAGGINVFGQITVETFASIVAHELGHNLGMNHDDGRDCSCGAKSCIMNSGASGSRNFSSCSAEDFEKLTLNKGGNCLLNIPKPDEAYSAPSCGNKLVDAGEECDCGTPKECELDPCCEGSTCKLKSFAECAYGDCCKDCRFLPGGTLCRGKTSECDVPEYCNGSSQFCQPDVFIQNGYPCQNNKAYCYNGMCQYYDAQCQVIFGSKAKAAPKDCFIEVNSKGDRFGNCGFSGNEYKKCATGNALCGKLQCENVQEIPVFGIVPAIIQTPSRGTKCWGVDFQLGSDVPDPGMVNEGTKCGAGKICRNFQCVDASVLNYDCDVQKKCHGHGVCNSNKNCHCENGWAPPNCETKGYGGSVDSGPTYNEMNTALRDGLLVFFFLIVPLIVCAIFIFIKRDQLWRSYFRKKRSQTYESDGKNQANPSRQPGSVPRHVSPVTPPREVPIYANRFAVPTYAAKQPQQFPSRPPPPQPKVSSQGNLIPARPAPAPPLYSSLT.

Residues 1–28 form the signal peptide; the sequence is MGSGARFPSGTLRVRWLLLLGLVGPVLG. Over 29 to 697 the chain is Extracellular; sequence AARPGFQQTS…YNEMNTALRD (669 aa). N-linked (GlcNAc...) asparagine glycosylation is found at N125, N144, N154, and N231. One can recognise a Peptidase M12B domain in the interval 212 to 406; it reads RYVELFIVVD…KGGNCLLNIP (195 aa). Disulfide bonds link C322-C401, C363-C385, C365-C370, C473-C493, C644-C656, C650-C662, and C664-C673. Zn(2+) is bound at residue H347. The active site involves E348. Zn(2+) contacts are provided by H351 and H357. Residues N381 and N487 are each glycosylated (N-linked (GlcNAc...) asparagine). The Disintegrin domain occupies 414 to 501; the sequence is APSCGNKLVD…FCQPDVFIQN (88 aa). In terms of domain architecture, EGF-like spans 644–698; it reads CDVQKKCHGHGVCNSNKNCHCENGWAPPNCETKGYGGSVDSGPTYNEMNTALRDG. A helical membrane pass occupies residues 698 to 718; sequence GLLVFFFLIVPLIVCAIFIFI. Topologically, residues 719–819 are cytoplasmic; it reads KRDQLWRSYF…PAPPLYSSLT (101 aa). Disordered stretches follow at residues 734 to 763 and 780 to 819; these read QTYE…VTPP and AKQP…SSLT. Polar residues predominate over residues 735–750; that stretch reads TYESDGKNQANPSRQP. Position 758 is a phosphoserine (S758). Residue T761 is modified to Phosphothreonine.

Interacts with SH3GL2 and SNX9 through its cytoplasmic tail. Interacts with ITGA6. Zn(2+) serves as cofactor. In terms of processing, proteolytically cleaved in the trans-Golgi network before it reaches the plasma membrane to generate a mature protein. The removal of the pro-domain occurs via cleavage at two different sites. Processed most likely by a pro-protein convertase such as furin, at the boundary between the pro-domain and the catalytic domain. An additional upstream cleavage pro-protein convertase site (Arg-56/Glu-57) has an important role in the activation of ADAM9. Phosphorylation is induced in vitro by phorbol-12-myristate-13-acetate (PMA). In terms of tissue distribution, widely expressed. Expressed in chondrocytes. Isoform 2 is highly expressed in liver and heart.

It localises to the cell membrane. It is found in the secreted. With respect to regulation, synthesized as an inactive form which is proteolytically cleaved to generate an active enzyme. Processing at the upstream site is particularly important for activation of the proenzyme, whereas processing at the boundary between the pro-domain and the catalytic domain does not appear to be essential. Inhibited by hydroxamic acid-based inhibitors. Functionally, metalloprotease that cleaves and releases a number of molecules with important roles in tumorigenesis and angiogenesis, such as TEK, KDR, EPHB4, CD40, VCAM1 and CDH5. May mediate cell-cell, cell-matrix interactions and regulate the motility of cells via interactions with integrins. Its function is as follows. May act as alpha-secretase for amyloid precursor protein (APP). The polypeptide is Disintegrin and metalloproteinase domain-containing protein 9 (ADAM9) (Homo sapiens (Human)).